Consider the following 90-residue polypeptide: MSVERQWYLYLLECTGGSIYTGITTDVARRFAQHQAGKGAKYTRSRKPLRVLGQVAFPSKSEALKAELATKRMSSAQKIAFCAKLEQPET.

A GIY-YIG domain is found at 5 to 80 (RQWYLYLLEC…KRMSSAQKIA (76 aa)).

It belongs to the UPF0213 family.

The sequence is that of UPF0213 protein Reut_B5558 from Cupriavidus pinatubonensis (strain JMP 134 / LMG 1197) (Cupriavidus necator (strain JMP 134)).